The following is a 351-amino-acid chain: MEIKDLQCNIFIPDPLSIKHMKIALVRDLTNNSFGRQATLLEKGLKELGHEVTSFEKNSIRKEDLPPGFDDYIYYTIFNTQLFWKGIPKHGKNIVFEVADTDAISSVALYFFRHQPVDKIIVPSQWSKNAFYTLKLPIPQPIYVIPHALNPSMFSYPPKEMPHPCVLAILPHSWDRKGGDIVVNVFRELMNSGYHFYPLILVSNMLEPRLRGLNAVKTPLPDPDYYSLFAGCDILFYPVRGGAFEIPVIEALALGLDVVVTEKGAWSEWILNNDDVYWIKVNKKVKLWYTNLFHVGYFLEPDYNDAYQKLVMALANWHPEKKKENLENRAILYRERYNYINIAKEWEKILA.

The protein belongs to the glycosyltransferase group 1 family.

The sequence is that of Putative glycosyltransferase 45 (SIFV0045) from Sulfolobus islandicus filamentous virus (isolate Iceland/Hveragerdi) (SIFV).